The primary structure comprises 207 residues: Dephospho-CoA kinase (207 aa).

The DPCK domain occupies 4–204; sequence VVGLTGGIGS…HLYLQFAEIF (201 aa). 12-17 lines the ATP pocket; sequence GSGKST.

This sequence belongs to the CoaE family.

The protein resides in the cytoplasm. The catalysed reaction is 3'-dephospho-CoA + ATP = ADP + CoA + H(+). It functions in the pathway cofactor biosynthesis; coenzyme A biosynthesis; CoA from (R)-pantothenate: step 5/5. Its function is as follows. Catalyzes the phosphorylation of the 3'-hydroxyl group of dephosphocoenzyme A to form coenzyme A. The protein is Dephospho-CoA kinase of Aggregatibacter actinomycetemcomitans (Actinobacillus actinomycetemcomitans).